The chain runs to 863 residues: NACHT, LRR and PYD domains-containing protein 4B (863 aa).

The Pyrin domain maps to 1–93; that stretch reads MASLFSDFGF…TNRATGEIAA (93 aa). Positions 143-466 constitute an NACHT domain; it reads KMVVLQGVAG…FYLLHSEMDH (324 aa). 149–156 is an ATP binding site; it reads GVAGIGKT. LRR repeat units lie at residues 618-643, 683-706, 717-740, 741-763, 765-782, 797-824, and 843-863; these read WHQI…IFNE, SYNL…MLCD, ILDL…LRQN, KSLR…ALCR, LTLP…ACQL, YKCL…AMKD, and SQEF…ENGV.

It belongs to the NLRP family.

In terms of biological role, may be involved in inflammation and recognition of cytosolic pathogen-associated molecular patterns (PAMPs) not intercepted by membrane-bound receptors. The protein is NACHT, LRR and PYD domains-containing protein 4B (Nlrp4b) of Mus musculus (Mouse).